A 256-amino-acid polypeptide reads, in one-letter code: Chlorophyll a-b binding protein CP24 10A, chloroplastic (256 aa).

The next 2 helical transmembrane spans lie at 106–126 and 134–154; these read WAMA…IPWF and AIAP…MGWV.

This sequence belongs to the ELIP/psbS family.

It localises to the plastid. It is found in the chloroplast thylakoid membrane. The protein is Chlorophyll a-b binding protein CP24 10A, chloroplastic (CAP10A) of Solanum lycopersicum (Tomato).